An 87-amino-acid polypeptide reads, in one-letter code: Retinal rod rhodopsin-sensitive cGMP 3',5'-cyclic phosphodiesterase subunit gamma (87 aa).

Met-1 carries the post-translational modification N-acetylmethionine. Residues 16–54 (VVGGPVTPRKGPPKFKQRQTRQFKSKPPKKGVQGFGDDI) form a disordered region. A compositionally biased stretch (basic residues) spans 26–44 (GPPKFKQRQTRQFKSKPPK).

Belongs to the rod/cone cGMP-PDE gamma subunit family. In terms of assembly, oligomer composed of two catalytic chains (alpha and beta), an inhibitory chain (gamma) and the delta chain.

It catalyses the reaction 3',5'-cyclic GMP + H2O = GMP + H(+). Participates in processes of transmission and amplification of the visual signal. cGMP-PDEs are the effector molecules in G-protein-mediated phototransduction in vertebrate rods and cones. This Cavia porcellus (Guinea pig) protein is Retinal rod rhodopsin-sensitive cGMP 3',5'-cyclic phosphodiesterase subunit gamma (PDE6G).